The chain runs to 904 residues: MPQLLRNVLCVIETFHKYASEDSNGATLTGRELKQLIQGEFGDFFQPCVLHAVEKNSNLLNIDSNGIISFDEFVLAIFNLLNLCYLDIKSLLSSELRQVTKPEKEKLDDVDVQATTGDGQWTVGTSPTQEKRMLPSGMASSSQLIPEESGAVGNNRVDPWREAKTHNFPGEASEHNDPKNKHLEGDEQSQEVAQDIQTTEDNEGQLKTNKPMAGSKKTSSPTERKGQDKEISQEGDEPAREQSVSKIRDQFGEQEGNLATQSSPPKEATQRPCEDQEVRTEKEKHSNIQEPPLQREDEPSSQHADLPEQAAARSPSQTQKSTDSKDVCRMFDTQEPGKDADQTPAKTKNLGEPEDYGRTSETQEKECETKDLPVQYGSRNGSETSDMRDERKERRGPEAHGTAGQKERDRKTRPLVLETQTQDGKYQELQGLSKSKDAEKGSETQYLSSEGGDQTHPELEGTAVSGEEAEHTKEGTAEAFVNSKNAPAAERTLGARERTQDLAPLEKQSVGENTRVTKTHDQPVEEEDGYQGEDPESPFTQSDEGSSETPNSLASEEGNSSSETGELPVQGDSQSQGDQHGESVQGGHNNNPDTQRQGTPGEKNRALEAVVPAVRGEDVQLTEDQEQPARGEHKNQGPGTKGPGAAVEPNGHPEAQESTAGDENRKSLEIEITGALDEDFTDQLSLMQLPGKGDSRNELKVQGPSSKEEKGRATEAQNTLLESLDEDNSASLKIQLETKEPVTSEEEDESPQELAGEGGDQKSPAKKEHNSSVPWSSLEKQMQRDQEPCSVERGAVYSSPLYQYLQEKILQQTNVTQEEHQKQVQIAQASGPELCSVSLTSEISDCSVFFNYSQASQPYTRGLPLDESPAGAQETPAPQALEDKQGHPQRERLVLQREASTTKQ.

The 36-residue stretch at 48-83 (CVLHAVEKNSNLLNIDSNGIISFDEFVLAIFNLLNL) folds into the EF-hand domain. Disordered regions lie at residues 102–792 (PEKE…CSVE) and 858–890 (PYTRGLPLDESPAGAQETPAPQALEDKQGHPQR). Positions 113–128 (QATTGDGQWTVGTSPT) are enriched in polar residues. 5 stretches are compositionally biased toward basic and acidic residues: residues 172 to 185 (ASEHNDPKNKHLEG), 222 to 240 (TERKGQDKEISQEGDEPAR), 268 to 300 (ATQRPCEDQEVRTEKEKHSNIQEPPLQREDEPS), 349 to 371 (NLGEPEDYGRTSETQEKECETKD), and 385 to 398 (SDMRDERKERRGPE). Polar residues predominate over residues 443-452 (ETQYLSSEGG). The segment covering 524–536 (VEEEDGYQGEDPE) has biased composition (acidic residues). The span at 538–554 (PFTQSDEGSSETPNSLA) shows a compositional bias: polar residues. A compositionally biased stretch (low complexity) spans 555-578 (SEEGNSSSETGELPVQGDSQSQGD). Residues 586 to 598 (GGHNNNPDTQRQG) are compositionally biased toward polar residues. Residues 759–770 (GDQKSPAKKEHN) are compositionally biased toward basic and acidic residues. The span at 771–780 (SSVPWSSLEK) shows a compositional bias: polar residues. A compositionally biased stretch (basic and acidic residues) spans 881–890 (LEDKQGHPQR).

This sequence belongs to the S-100 family.

The sequence is that of Trichohyalin-like protein 1 (TCHHL1) from Homo sapiens (Human).